The sequence spans 441 residues: Ribulose bisphosphate carboxylase large chain (441 aa).

Substrate contacts are provided by Asn-89 and Thr-139. Lys-141 (proton acceptor) is an active-site residue. Lys-143 contacts substrate. 3 residues coordinate Mg(2+): Lys-167, Asp-169, and Glu-170. Residue Lys-167 is modified to N6-carboxylysine. His-260 acts as the Proton acceptor in catalysis. Xaa-261, His-293, and Ser-345 together coordinate substrate.

This sequence belongs to the RuBisCO large chain family. Type I subfamily. Heterohexadecamer of 8 large chains and 8 small chains; disulfide-linked. The disulfide link is formed within the large subunit homodimers. Mg(2+) is required as a cofactor. The disulfide bond which can form in the large chain dimeric partners within the hexadecamer appears to be associated with oxidative stress and protein turnover.

It localises to the plastid. Its subcellular location is the chloroplast. It carries out the reaction 2 (2R)-3-phosphoglycerate + 2 H(+) = D-ribulose 1,5-bisphosphate + CO2 + H2O. The enzyme catalyses D-ribulose 1,5-bisphosphate + O2 = 2-phosphoglycolate + (2R)-3-phosphoglycerate + 2 H(+). Functionally, ruBisCO catalyzes two reactions: the carboxylation of D-ribulose 1,5-bisphosphate, the primary event in carbon dioxide fixation, as well as the oxidative fragmentation of the pentose substrate in the photorespiration process. Both reactions occur simultaneously and in competition at the same active site. This Apocynum cannabinum (Hemp dogbane) protein is Ribulose bisphosphate carboxylase large chain.